Here is a 142-residue protein sequence, read N- to C-terminus: Large ribosomal subunit protein uL11 (142 aa).

The protein belongs to the universal ribosomal protein uL11 family. As to quaternary structure, part of the ribosomal stalk of the 50S ribosomal subunit. Interacts with L10 and the large rRNA to form the base of the stalk. L10 forms an elongated spine to which L12 dimers bind in a sequential fashion forming a multimeric L10(L12)X complex. One or more lysine residues are methylated.

Forms part of the ribosomal stalk which helps the ribosome interact with GTP-bound translation factors. The protein is Large ribosomal subunit protein uL11 of Shewanella sp. (strain W3-18-1).